The following is a 333-amino-acid chain: L-lactate dehydrogenase B chain (333 aa).

NAD(+)-binding positions include Gly-29–Lys-57 and Arg-99. 3 residues coordinate substrate: Arg-106, Asn-138, and Arg-169. Asn-138 is an NAD(+) binding site. His-193 functions as the Proton acceptor in the catalytic mechanism. Thr-248 contributes to the substrate binding site.

Belongs to the LDH/MDH superfamily. LDH family. As to quaternary structure, homotetramer.

It localises to the cytoplasm. The enzyme catalyses (S)-lactate + NAD(+) = pyruvate + NADH + H(+). It participates in fermentation; pyruvate fermentation to lactate; (S)-lactate from pyruvate: step 1/1. Its function is as follows. Interconverts simultaneously and stereospecifically pyruvate and lactate with concomitant interconversion of NADH and NAD(+). The protein is L-lactate dehydrogenase B chain (LDHB) of Pelodiscus sinensis japonicus (Chinese soft-shelled turtle).